A 298-amino-acid polypeptide reads, in one-letter code: Protoheme IX farnesyltransferase (298 aa).

The next 9 helical transmembrane spans lie at 28–48, 50–70, 95–117, 121–138, 149–169, 176–196, 222–242, 243–263, and 274–294; these read VVAL…EELV, LKVL…AAAI, LSPA…TLYA, PLTA…AVVY, NIVI…TSVT, AVLL…ALAV, CIFL…LIGM, TGMI…AYAW, and AFNM…ILLV.

Belongs to the UbiA prenyltransferase family. Protoheme IX farnesyltransferase subfamily.

Its subcellular location is the cell inner membrane. It carries out the reaction heme b + (2E,6E)-farnesyl diphosphate + H2O = Fe(II)-heme o + diphosphate. Its pathway is porphyrin-containing compound metabolism; heme O biosynthesis; heme O from protoheme: step 1/1. Converts heme B (protoheme IX) to heme O by substitution of the vinyl group on carbon 2 of heme B porphyrin ring with a hydroxyethyl farnesyl side group. This chain is Protoheme IX farnesyltransferase, found in Idiomarina loihiensis (strain ATCC BAA-735 / DSM 15497 / L2-TR).